Here is a 360-residue protein sequence, read N- to C-terminus: Probable dual-specificity RNA methyltransferase RlmN (360 aa).

Glutamate 91 serves as the catalytic Proton acceptor. The 239-residue stretch at 97-335 (QHYGQSVCVT…CVVRQEHGTD (239 aa)) folds into the Radical SAM core domain. A disulfide bridge links cysteine 104 with cysteine 340. [4Fe-4S] cluster is bound by residues cysteine 111, cysteine 115, and cysteine 118. S-adenosyl-L-methionine-binding positions include 163–164 (GE), serine 195, 218–220 (SLH), and asparagine 296. Cysteine 340 serves as the catalytic S-methylcysteine intermediate.

The protein belongs to the radical SAM superfamily. RlmN family. The cofactor is [4Fe-4S] cluster.

The protein localises to the cytoplasm. The enzyme catalyses adenosine(2503) in 23S rRNA + 2 reduced [2Fe-2S]-[ferredoxin] + 2 S-adenosyl-L-methionine = 2-methyladenosine(2503) in 23S rRNA + 5'-deoxyadenosine + L-methionine + 2 oxidized [2Fe-2S]-[ferredoxin] + S-adenosyl-L-homocysteine. The catalysed reaction is adenosine(37) in tRNA + 2 reduced [2Fe-2S]-[ferredoxin] + 2 S-adenosyl-L-methionine = 2-methyladenosine(37) in tRNA + 5'-deoxyadenosine + L-methionine + 2 oxidized [2Fe-2S]-[ferredoxin] + S-adenosyl-L-homocysteine. In terms of biological role, specifically methylates position 2 of adenine 2503 in 23S rRNA and position 2 of adenine 37 in tRNAs. This is Probable dual-specificity RNA methyltransferase RlmN from Streptococcus equi subsp. equi (strain 4047).